The chain runs to 636 residues: Methyl-CpG-binding domain protein 1 (636 aa).

Residues 1–69 (MAESWQDCPA…TLFDFRQGTL (69 aa)) form the MBD domain. The tract at residues 75-113 (KTHPLAVPSKKKKKPSKPAKTKKQQVGLQRSEVRIETPQ) is disordered. Positions 83 to 97 (SKKKKKPSKPAKTKK) are enriched in basic residues. A Nuclear localization signal motif is present at residues 84–88 (KKKKK). A Glycyl lysine isopeptide (Lys-Gly) (interchain with G-Cter in SUMO2) cross-link involves residue lysine 117. CXXC-type zinc fingers lie at residues 187-234 (RMFK…RRCL) and 235-281 (RIME…RRCF). 16 residues coordinate Zn(2+): cysteine 194, cysteine 197, cysteine 200, cysteine 206, cysteine 209, cysteine 212, cysteine 228, cysteine 233, cysteine 243, cysteine 246, cysteine 249, cysteine 255, cysteine 258, cysteine 261, cysteine 275, and cysteine 280. The tract at residues 291–314 (GSKVASQRHSQAPPLPPHPASQYT) is disordered. Lysine 293 participates in a covalent cross-link: Glycyl lysine isopeptide (Lys-Gly) (interchain with G-Cter in SUMO2). The segment at 348-396 (TNQRQNRKCGACAACLRRMDCGRCDFCCDKPKFGGGNQKRQKCRWRQCL) adopts a CXXC-type 3 zinc-finger fold. Cysteine 356, cysteine 359, cysteine 362, cysteine 368, cysteine 371, cysteine 374, cysteine 390, and cysteine 395 together coordinate Zn(2+). Positions 407–474 (AGSGSGEGAG…GRGSVLPQPD (68 aa)) are disordered. At serine 409 the chain carries Phosphoserine. Residues lysine 443 and lysine 461 each participate in a glycyl lysine isopeptide (Lys-Gly) (interchain with G-Cter in SUMO2) cross-link. Residues lysine 520 and lysine 559 each participate in a glycyl lysine isopeptide (Lys-Gly) (interchain with G-Cter in SUMO2); alternate cross-link. The interval 543–589 (QSGFPSKAADPDLSPVKQEPPGPEEDGEEKKDDVSETTPAEEIGGVG) is disordered. Residues 550–612 (AADPDLSPVK…RLRDAEAWLP (63 aa)) form a transcriptional repression domain (TRD) region.

In terms of assembly, interacts with OASL, ATF7IP, ATF7IP2 and BAHD1. Binds CHAF1A and the SUV39H1-CBX5 complex via the MBD domain. Binds MGP via the TRD domain. May be part of the MeCP1 complex. During DNA replication, it recruits SETDB1 to form a S phase-specific complex that facilitates methylation of H3 'Lys-9' during replication-coupled chromatin assembly and is at least composed of the CAF-1 subunit CHAF1A, MBD1 and SETDB1. Interacts with the Ten-1 ICD form of TENM1. Sumoylated, sumoylation may increase interaction with ATF7IP. As to expression, highly expressed in kidney, liver and brain. Detected at lower levels in heart, lung, skeletal muscle, spleen and testis.

It localises to the nucleus. The protein resides in the nucleus matrix. It is found in the nucleus speckle. Its subcellular location is the chromosome. Transcriptional repressor that binds CpG islands in promoters where the DNA is methylated at position 5 of cytosine within CpG dinucleotides. Binding is abolished by the presence of 7-mG that is produced by DNA damage by methylmethanesulfonate (MMS). Acts as transcriptional repressor and plays a role in gene silencing by recruiting ATF7IP, which in turn recruits factors such as the histone methyltransferase SETDB1. Probably forms a complex with SETDB1 and ATF7IP that represses transcription and couples DNA methylation and histone 'Lys-9' trimethylation. Isoform 1 can also repress transcription from unmethylated promoters. The chain is Methyl-CpG-binding domain protein 1 from Mus musculus (Mouse).